The sequence spans 136 residues: UPF0102 protein BBta_0181 (136 aa).

Belongs to the UPF0102 family.

In Bradyrhizobium sp. (strain BTAi1 / ATCC BAA-1182), this protein is UPF0102 protein BBta_0181.